Here is a 161-residue protein sequence, read N- to C-terminus: Dihydrofolate reductase type 1 from Tn4003 (161 aa).

The DHFR domain occupies 2–157 (TLSIIVAHDK…IPHTFLHLVR (156 aa)). A substrate-binding site is contributed by 6–8 (IVA). Residues 7 to 8 (VA) and 15 to 20 (IGYQNQ) each bind NADP(+). Aspartate 28 serves as a coordination point for substrate. 44-47 (ARKT) contacts NADP(+). Residue arginine 58 participates in substrate binding. Residues 63–66 (LTNQ) and 93–98 (FGGQTL) each bind NADP(+). A substrate-binding site is contributed by threonine 112.

The protein belongs to the dihydrofolate reductase family.

The enzyme catalyses (6S)-5,6,7,8-tetrahydrofolate + NADP(+) = 7,8-dihydrofolate + NADPH + H(+). Its pathway is cofactor biosynthesis; tetrahydrofolate biosynthesis; 5,6,7,8-tetrahydrofolate from 7,8-dihydrofolate: step 1/1. In terms of biological role, key enzyme in folate metabolism. Catalyzes an essential reaction for de novo glycine and purine synthesis, and for DNA precursor synthesis. This is Dihydrofolate reductase type 1 from Tn4003 (dfrA) from Staphylococcus aureus.